The chain runs to 230 residues: Stachydrine N-demethylase reductase subunit Stc3 (230 aa).

It belongs to the non-flavoprotein flavin reductase family. The system is probably composed of an oxygenase subunit (Stc2) and two reductase subunits (Stc3 and Stc4).

Reductase involved in the catabolism of stachydrine (L-proline betaine), a source of carbon and nitrogen. Part of a Rieske-type oxygenase system that catalyzes the demethylation of stachydrine to produce N-methyl-L-proline (monomethylproline). This subunit is probably involved in the transfer of electrons from NAD(P)H to the catalytic subunit Stc2. The chain is Stachydrine N-demethylase reductase subunit Stc3 from Rhizobium meliloti (strain 1021) (Ensifer meliloti).